The chain runs to 386 residues: Putrescine N-methyltransferase 4 (386 aa).

3 stretches are compositionally biased toward polar residues: residues 1-14 (MEVISTNTNGSTIF), 23-48 (GHQSGTSKHLNGYQNGTSKHQNGHHN), and 57-87 (HQNGISEHQNGHQNGTSEQQNGTISHDNGNE). The interval 1 to 87 (MEVISTNTNG…GTISHDNGNE (87 aa)) is disordered. The region spanning 97-334 (LGWFSEFSAL…GVIGYMLCST (238 aa)) is the PABS domain. S-adenosyl-L-methionine contacts are provided by residues glutamine 128, glutamate 203, and 234-235 (DG). Aspartate 253 (proton acceptor) is an active-site residue. Tyrosine 322 is a binding site for S-adenosyl-L-methionine.

Belongs to the class I-like SAM-binding methyltransferase superfamily. Putrescine methyltransferase family. In terms of tissue distribution, predominantly expressed in roots.

The enzyme catalyses putrescine + S-adenosyl-L-methionine = N-methylputrescine + S-adenosyl-L-homocysteine + H(+). It participates in alkaloid biosynthesis; nicotine biosynthesis. In terms of biological role, involved in the biosynthesis of pyridine alkaloid natural products, leading mainly to the production of anabasine, anatabine, nicotine and nornicotine, effective deterrents against herbivores with antiparasitic and pesticide properties (neurotoxins); nornicotine serves as the precursor in the synthesis of the carcinogen compound N'-nitrosonornicotine (NNN). Methyltransferase that mediates the conversion of putrescine to N-methylputrescine. Promotes leaves ripening. The polypeptide is Putrescine N-methyltransferase 4 (Nicotiana tabacum (Common tobacco)).